Reading from the N-terminus, the 115-residue chain is uncharacterized protein (115 aa).

3 helical membrane-spanning segments follow: residues 1-21 (MFLAGVLCMCAAAASALFGSW), 33-53 (ALALRAMAPTQLAAAVMLAAG), and 54-74 (GVVAVAAPGHTALMVVIVCIA).

The protein to M.leprae ML0030.

It is found in the cell membrane. This is an uncharacterized protein from Mycobacterium tuberculosis (strain CDC 1551 / Oshkosh).